Reading from the N-terminus, the 168-residue chain is Photosystem I assembly protein Ycf3 (168 aa).

TPR repeat units follow at residues 35-68, 72-105, and 120-153; these read AFTY…EIDP, SYIL…NPFL, and GEQA…TPGN.

It belongs to the Ycf3 family.

The protein resides in the plastid. It is found in the chloroplast thylakoid membrane. Functionally, essential for the assembly of the photosystem I (PSI) complex. May act as a chaperone-like factor to guide the assembly of the PSI subunits. This Calycanthus floridus var. glaucus (Eastern sweetshrub) protein is Photosystem I assembly protein Ycf3.